We begin with the raw amino-acid sequence, 47 residues long: Conotoxin Cal6.18 (47 aa).

Positions 1–19 (MKLTYVLIVAMLVLVVCRA) are cleaved as a signal peptide.

Belongs to the conotoxin O1 superfamily. May contain 3 disulfide bonds. In terms of tissue distribution, expressed by the venom duct.

It localises to the secreted. Functionally, probable neurotoxin. The protein is Conotoxin Cal6.18 of Californiconus californicus (California cone).